The chain runs to 255 residues: Tablysin 15 (255 aa).

The N-terminal stretch at 1-23 is a signal peptide; the sequence is MTSIPVSSFLLAALVLQYATSDA. 3 disulfide bridges follow: Cys27/Cys40, Cys31/Cys117, and Cys49/Cys110. Residues 32 to 34 carry the Cell attachment site motif; that stretch reads RGD. An SCP domain is found at 67 to 211; the sequence is LSKINDVRDH…KARALLTCNF (145 aa). Leukotriene E4-binding residues include Trp82, His153, and Lys156. Cystine bridges form between Cys192-Cys209 and Cys232-Cys243.

The protein belongs to the CRISP family. In terms of tissue distribution, expressed in salivary glands.

The protein resides in the secreted. Functionally, anti-inflammatory scavenger of eicosanoids and antithrombotic protein that inhibits platelets aggregation induced by collagen, ADP and convulxin (GPVI agonist). Exhibits high affinity binding for glycoprotein IIb-IIIa receptor (ITGA2B/ITGB3) and endothelial cell alphaVbeta3 (ITGAV/ITGB3) integrins, but not for alpha-5/beta-1 or alpha-2/beta-1. Accordingly, it blocks endothelial cell adhesion to vitronectin (IC(50)~1 nM) and marginally to fibronectin (IC(50)~1 uM), but not to collagen. It also inhibits fibroblast growth factor (FGF)-induced endothelial cell proliferation, and attenuates tube formation in vitro. In addition, it dose-dependently attenuates thrombus formation to collagen under flow. Also binds proinflammatory cysteinyl leukotrienes (leukotrienes C4 (LTC4), D4 (LTD4) and E4 (LTE4)) with submicromolar affinities. The sequence is that of Tablysin 15 from Tabanus yao (Horsefly).